The sequence spans 72 residues: DNA-directed RNA polymerase subunit epsilon (72 aa).

This sequence belongs to the RNA polymerase subunit epsilon family. In terms of assembly, RNAP is composed of a core of 2 alpha, a beta and a beta' subunit. The core is associated with a delta subunit, and at least one of epsilon or omega. When a sigma factor is associated with the core the holoenzyme is formed, which can initiate transcription.

The enzyme catalyses RNA(n) + a ribonucleoside 5'-triphosphate = RNA(n+1) + diphosphate. Its function is as follows. A non-essential component of RNA polymerase (RNAP). This chain is DNA-directed RNA polymerase subunit epsilon, found in Staphylococcus haemolyticus (strain JCSC1435).